The sequence spans 288 residues: Bifunctional protein FolD (288 aa).

Residues 166–168 (GAS) and isoleucine 232 contribute to the NADP(+) site.

It belongs to the tetrahydrofolate dehydrogenase/cyclohydrolase family. As to quaternary structure, homodimer.

The catalysed reaction is (6R)-5,10-methylene-5,6,7,8-tetrahydrofolate + NADP(+) = (6R)-5,10-methenyltetrahydrofolate + NADPH. It carries out the reaction (6R)-5,10-methenyltetrahydrofolate + H2O = (6R)-10-formyltetrahydrofolate + H(+). It functions in the pathway one-carbon metabolism; tetrahydrofolate interconversion. In terms of biological role, catalyzes the oxidation of 5,10-methylenetetrahydrofolate to 5,10-methenyltetrahydrofolate and then the hydrolysis of 5,10-methenyltetrahydrofolate to 10-formyltetrahydrofolate. This Yersinia pseudotuberculosis serotype O:1b (strain IP 31758) protein is Bifunctional protein FolD.